The primary structure comprises 124 residues: Cysteine-rich DPF motif domain-containing protein 1 (124 aa).

Positions 105–124 (MDKRKPQSKCLTRKKKDSRT) are disordered. Positions 115–124 (LTRKKKDSRT) are enriched in basic residues.

The protein belongs to the CDPF1 family.

In Gallus gallus (Chicken), this protein is Cysteine-rich DPF motif domain-containing protein 1 (CDPF1).